Reading from the N-terminus, the 233-residue chain is MIELKHVTFGYNKKQMVLQDINITIPDGENVGILGESGCGKSTLASLVLGLFKPVKGEIYLSDNAVLTIFQHPLTSFNPDWTIETSLKEALYYYRGLTDNTAQDQLLLQHLSTFELNAQLLTKLPSEVSGGQLQRFNVMRSLLAQPRVLICDEITSNLDVIAEQNVINILKAQTITNLNHFIVISHDLSVLQRLVNRIIVLKDGMIVDDFAIEELFNVDRHPYTKELVQTFSY.

Residues Ile-2–Val-228 enclose the ABC transporter domain. Gly-35–Ser-42 contributes to the ATP binding site.

Belongs to the ABC transporter superfamily. As to quaternary structure, the complex is composed of two ATP-binding proteins (NikD and NikE), two transmembrane proteins (NikB and NikC) and a solute-binding protein (NikA).

It localises to the cell membrane. The enzyme catalyses Ni(2+)(out) + ATP + H2O = Ni(2+)(in) + ADP + phosphate + H(+). Functionally, part of the ABC transporter complex NikABCDE (Opp2) involved in nickel import. Probably responsible for energy coupling to the transport system. The sequence is that of Nickel import system ATP-binding protein NikE from Staphylococcus aureus (strain Mu50 / ATCC 700699).